Reading from the N-terminus, the 79-residue chain is UPF0349 protein BCE33L4669 (79 aa).

Belongs to the UPF0349 family.

In Bacillus cereus (strain ZK / E33L), this protein is UPF0349 protein BCE33L4669.